The chain runs to 479 residues: Serine--tRNA ligase, mitochondrial (479 aa).

Residues 1-42 (MRLTNRRFSTFLGNALPSKKKGFIFMSQLLYLRTFSTHTSYL) constitute a mitochondrion transit peptide. 287-289 (TAE) contributes to the L-serine binding site. 317-319 (RRE) contributes to the ATP binding site. Position 340 (Glu-340) interacts with L-serine. 404–407 (EITS) is a binding site for ATP. Position 438 (Thr-438) interacts with L-serine.

It belongs to the class-II aminoacyl-tRNA synthetase family. Type-1 seryl-tRNA synthetase subfamily. Homodimer. The tRNA molecule probably binds across the dimer.

It is found in the mitochondrion matrix. It catalyses the reaction tRNA(Ser) + L-serine + ATP = L-seryl-tRNA(Ser) + AMP + diphosphate + H(+). Catalyzes the attachment of serine to tRNA(Ser). Is also probably able to aminoacylate tRNA(Sec) with serine, to form the misacylated tRNA L-seryl-tRNA(Sec), which will be further converted into selenocysteinyl-tRNA(Sec). The chain is Serine--tRNA ligase, mitochondrial (dia4) from Schizosaccharomyces pombe (strain 972 / ATCC 24843) (Fission yeast).